Here is a 76-residue protein sequence, read N- to C-terminus: MRSRGFYEWLMTQRKPENADEVQEFANAAFFDSEFPKQSQNFDEISKYLEENAPYLMSMEVFDEAWRRFLASEEEL.

It belongs to the UPF0346 family.

This Oenococcus oeni (strain ATCC BAA-331 / PSU-1) protein is UPF0346 protein OEOE_1017.